The following is a 193-amino-acid chain: p53 apoptosis effector related to PMP-22 (193 aa).

The next 4 membrane-spanning stretches (helical) occupy residues 12–32, 81–101, 110–130, and 151–171; these read RWIL…ALAG, LFCG…ALCG, VIGG…VIYP, and WAYG…FFFC.

It belongs to the TMEM47 family. In terms of tissue distribution, expressed in the stratified squamous skin epithelium of the skin and the tongue, but not in simple epithelia (at protein level). Expressed in the oral epithelium, tongue epithelium and skin (at protein level). More abundant in areas of lower flow stress in the inner curvature compared to the outer curvature regions of the aorta (at protein level). Expressed in luminal cells and myoepithelium cells of the mammary epithelium (at protein level). Expression increases during the early stages of pregnancy before decreasing before birth, expression continues to be weak during involution which mirrors decreased desmosome abundance and organization at these time points (at protein level). Expressed by epithelial cells at the mucosal surface in the proximal colon (at protein level). Expressed in apoptotic cells.

It localises to the cell junction. The protein resides in the desmosome. The protein localises to the cell membrane. Its subcellular location is the cytoplasm. In terms of biological role, component of intercellular desmosome junctions. Plays a role in stratified epithelial integrity and cell-cell adhesion by promoting desmosome assembly. Thereby plays a role in barrier function of the skin against infection. Plays a role in mammary epithelial tissue homeostasis and remodeling during and after pregnancy, potentially via its involvement in desmosome cell-cell junctions. Required for tooth enamel development via facilitating desmosome-mediated ameloblast adhesion to the stratum intermedium during the transitional stage of amelogenesis. May also play a role in downstream transcriptional regulation of other genes involved in amelogenesis such as AMBN, ENAM, MMP20 and KLK4. Plays a role as an effector in the TP53-dependent apoptotic pathway. Positively regulates apoptosis in T-helper 17 (Th17) cell populations via caspase-dependent signaling. Promotes neutrophil transepithelial migration in response to chemoattractants such as hepoxilin A3 (HXA3), N-Formylmethionyl-leucyl-phenylalanine (fMLP) and CXCL8/IL-8. May act as a positive regulator of endothelial cell apoptosis in response to blood flow-derived shear stress. In Mus musculus (Mouse), this protein is p53 apoptosis effector related to PMP-22.